Here is a 105-residue protein sequence, read N- to C-terminus: Large ribosomal subunit protein P2 (105 aa).

This sequence belongs to the eukaryotic ribosomal protein P1/P2 family. In terms of assembly, P1 and P2 exist as dimers at the large ribosomal subunit. In terms of processing, phosphorylated.

Functionally, plays an important role in the elongation step of protein synthesis. The chain is Large ribosomal subunit protein P2 (LIP2) from Leishmania braziliensis.